We begin with the raw amino-acid sequence, 303 residues long: Acetyl-coenzyme A carboxylase carboxyl transferase subunit beta (303 aa).

In terms of domain architecture, CoA carboxyltransferase N-terminal spans Leu29–Ala298.

It belongs to the AccD/PCCB family. As to quaternary structure, acetyl-CoA carboxylase is a heterohexamer composed of biotin carboxyl carrier protein (AccB), biotin carboxylase (AccC) and two subunits each of ACCase subunit alpha (AccA) and ACCase subunit beta (AccD).

Its subcellular location is the cytoplasm. The catalysed reaction is N(6)-carboxybiotinyl-L-lysyl-[protein] + acetyl-CoA = N(6)-biotinyl-L-lysyl-[protein] + malonyl-CoA. The protein operates within lipid metabolism; malonyl-CoA biosynthesis; malonyl-CoA from acetyl-CoA: step 1/1. Component of the acetyl coenzyme A carboxylase (ACC) complex. Biotin carboxylase (BC) catalyzes the carboxylation of biotin on its carrier protein (BCCP) and then the CO(2) group is transferred by the transcarboxylase to acetyl-CoA to form malonyl-CoA. In Methylobacterium sp. (strain 4-46), this protein is Acetyl-coenzyme A carboxylase carboxyl transferase subunit beta.